Here is a 144-residue protein sequence, read N- to C-terminus: Superoxide dismutase [Mn], mitochondrial (144 aa).

Mn(2+) contacts are provided by histidine 10, histidine 58, and aspartate 143.

The protein belongs to the iron/manganese superoxide dismutase family. In terms of assembly, homotetramer. It depends on Mn(2+) as a cofactor.

The protein resides in the mitochondrion matrix. It carries out the reaction 2 superoxide + 2 H(+) = H2O2 + O2. Its function is as follows. Destroys superoxide anion radicals which are normally produced within the cells and which are toxic to biological systems. The polypeptide is Superoxide dismutase [Mn], mitochondrial (Petromyzon marinus (Sea lamprey)).